A 220-amino-acid polypeptide reads, in one-letter code: Vesicle-associated protein 2-1 (220 aa).

Met1 bears the N-acetylmethionine mark. The Cytoplasmic portion of the chain corresponds to Met1–Lys196. At Thr2 the chain carries N-acetylthreonine; in Vesicle-associated protein 2-1, N-terminally processed. The MSP domain maps to Leu9–Ile129. Residues Thr133–Ser154 are disordered. Positions Ile153–Asn188 form a coiled coil. Residues Leu197–Ala217 form a helical; Anchor for type IV membrane protein membrane-spanning segment.

The protein belongs to the VAMP-associated protein (VAP) (TC 9.B.17) family.

Its subcellular location is the endoplasmic reticulum membrane. In terms of biological role, may play a role in vesicle trafficking. The chain is Vesicle-associated protein 2-1 (PVA21) from Arabidopsis thaliana (Mouse-ear cress).